The primary structure comprises 389 residues: tRNA-specific 2-thiouridylase MnmA (389 aa).

Residues 33–40 and leucine 59 each bind ATP; that span reads GLSGGVDS. Cysteine 120 acts as the Nucleophile in catalysis. An intrachain disulfide couples cysteine 120 to cysteine 219. Glycine 145 provides a ligand contact to ATP. The interval 169–171 is interaction with tRNA; sequence KDQ. Cysteine 219 (cysteine persulfide intermediate) is an active-site residue. The interaction with tRNA stretch occupies residues 326 to 327; it reads RY.

The protein belongs to the MnmA/TRMU family.

The protein resides in the cytoplasm. It carries out the reaction S-sulfanyl-L-cysteinyl-[protein] + uridine(34) in tRNA + AH2 + ATP = 2-thiouridine(34) in tRNA + L-cysteinyl-[protein] + A + AMP + diphosphate + H(+). Catalyzes the 2-thiolation of uridine at the wobble position (U34) of tRNA, leading to the formation of s(2)U34. In Synechococcus sp. (strain WH7803), this protein is tRNA-specific 2-thiouridylase MnmA.